Reading from the N-terminus, the 509-residue chain is Maturase K (509 aa).

It belongs to the intron maturase 2 family. MatK subfamily.

Its subcellular location is the plastid. It localises to the chloroplast. In terms of biological role, usually encoded in the trnK tRNA gene intron. Probably assists in splicing its own and other chloroplast group II introns. The sequence is that of Maturase K from Stylosanthes hamata (Caribbean stylo).